We begin with the raw amino-acid sequence, 634 residues long: MFARRVCGSAAASAACLARHESQKVQGDVIGVDLGTTYSCVATMDGDKARVLENSEGFRTTPSVVAFKGSEKLVGLAAKRQAITNPQSTFYAVKRLIGRRFEDEHIQKDIKNVPYKIVRAGNGDAWVQDGNGKQYSPSQIGAFVLEKMKETAENFLGHKVSNAVVTCPAYFNDAQRQATKDAGTIAGLNVIRVVNEPTAAALAYGMDKTKDSLIAVYDLGGGTFDISVLEIAGGVFEVKATNGDTHLGGEDFDLALSDYILEEFRKTSGIDLSKERMALQRVREAAEKAKCELSSAMETEVNLPFITANADGAQHIQMRISRSKFEGITQRLIERSIAPCKQCMKDAGVELKEINDVVLVGGMTRIRSGGGGEEVLPEGPVRGVNPDEAVALGAATLGGVLRGKASDLILVDVTPLSLGTSVVGDVFVPIIPKNTTIPCMRSHIFTTVDDGQTAIKFKVFQGEREIASENQIRGEFDLSGIPPAPRGVPQVEVTFDIDANGICHVTAKDKATGKTQNITITANGGLSKEQIEQMIRDSEQHAEADRVKRELVEVRNNAETQLTTAERQLGEWKYVSDAEKENVKTLVAELRKAMENPNVAKDDLAAATDKLQKAVMECGRTEYQQAAAANSGQC.

The N-terminal 20 residues, 1-20 (MFARRVCGSAAASAACLARH), are a transit peptide targeting the mitochondrion. The stretch at 538–614 (SEQHAEADRV…AAATDKLQKA (77 aa)) forms a coiled coil.

The protein belongs to the heat shock protein 70 family.

It is found in the mitochondrion. The chain is Heat shock 70-related protein 1, mitochondrial (HSP70.1) from Leishmania major.